The sequence spans 268 residues: MRRIDSCFAELRANGRKALIPFITAGDPSLEATVPVMHALVRAGADVIELGVPFSDPMADGPTIQRSSERALARGAGLAYVLEAVHEFRREDATTPVVLMGYLNPIEIHGTRRFAEAAVAAGVDGVLLVDLPPEEAGETRTIFTEVGLALIALASPTTSEQRLDMLCSTAQGYLYYVSFAGVTGASNLLDTHAASDRLRQLRRRAGAPVVAGFGIKDAASAAAMAVDADGVVVGSALVAALAEVNDVRSARERAEAFLAPLRQALDQG.

Catalysis depends on proton acceptor residues glutamate 49 and aspartate 60.

This sequence belongs to the TrpA family. In terms of assembly, tetramer of two alpha and two beta chains.

The catalysed reaction is (1S,2R)-1-C-(indol-3-yl)glycerol 3-phosphate + L-serine = D-glyceraldehyde 3-phosphate + L-tryptophan + H2O. Its pathway is amino-acid biosynthesis; L-tryptophan biosynthesis; L-tryptophan from chorismate: step 5/5. The alpha subunit is responsible for the aldol cleavage of indoleglycerol phosphate to indole and glyceraldehyde 3-phosphate. This is Tryptophan synthase alpha chain from Xanthomonas axonopodis pv. citri (strain 306).